The following is a 281-amino-acid chain: 2,3,4,5-tetrahydropyridine-2,6-dicarboxylate N-succinyltransferase (281 aa).

Positions 108 and 145 each coordinate substrate.

The protein belongs to the transferase hexapeptide repeat family. Homotrimer.

It is found in the cytoplasm. The catalysed reaction is (S)-2,3,4,5-tetrahydrodipicolinate + succinyl-CoA + H2O = (S)-2-succinylamino-6-oxoheptanedioate + CoA. It participates in amino-acid biosynthesis; L-lysine biosynthesis via DAP pathway; LL-2,6-diaminopimelate from (S)-tetrahydrodipicolinate (succinylase route): step 1/3. The chain is 2,3,4,5-tetrahydropyridine-2,6-dicarboxylate N-succinyltransferase from Rhodopseudomonas palustris (strain BisA53).